The primary structure comprises 417 residues: NADH-quinone oxidoreductase subunit D (417 aa).

It belongs to the complex I 49 kDa subunit family. As to quaternary structure, NDH-1 is composed of 14 different subunits. Subunits NuoB, C, D, E, F, and G constitute the peripheral sector of the complex.

The protein localises to the cell inner membrane. It carries out the reaction a quinone + NADH + 5 H(+)(in) = a quinol + NAD(+) + 4 H(+)(out). In terms of biological role, NDH-1 shuttles electrons from NADH, via FMN and iron-sulfur (Fe-S) centers, to quinones in the respiratory chain. The immediate electron acceptor for the enzyme in this species is believed to be ubiquinone. Couples the redox reaction to proton translocation (for every two electrons transferred, four hydrogen ions are translocated across the cytoplasmic membrane), and thus conserves the redox energy in a proton gradient. The sequence is that of NADH-quinone oxidoreductase subunit D from Nitrosomonas europaea (strain ATCC 19718 / CIP 103999 / KCTC 2705 / NBRC 14298).